The sequence spans 425 residues: Serine--tRNA ligase (425 aa).

L-serine is bound at residue 230–232; sequence TAE. Residue 261–263 coordinates ATP; sequence RAE. Glu284 is an L-serine binding site. 348 to 351 provides a ligand contact to ATP; sequence EISS. L-serine is bound at residue Ser384.

The protein belongs to the class-II aminoacyl-tRNA synthetase family. Type-1 seryl-tRNA synthetase subfamily. In terms of assembly, homodimer. The tRNA molecule binds across the dimer.

It is found in the cytoplasm. It catalyses the reaction tRNA(Ser) + L-serine + ATP = L-seryl-tRNA(Ser) + AMP + diphosphate + H(+). The enzyme catalyses tRNA(Sec) + L-serine + ATP = L-seryl-tRNA(Sec) + AMP + diphosphate + H(+). It functions in the pathway aminoacyl-tRNA biosynthesis; selenocysteinyl-tRNA(Sec) biosynthesis; L-seryl-tRNA(Sec) from L-serine and tRNA(Sec): step 1/1. Catalyzes the attachment of serine to tRNA(Ser). Is also able to aminoacylate tRNA(Sec) with serine, to form the misacylated tRNA L-seryl-tRNA(Sec), which will be further converted into selenocysteinyl-tRNA(Sec). The sequence is that of Serine--tRNA ligase from Desulforudis audaxviator (strain MP104C).